Consider the following 278-residue polypeptide: Formamidopyrimidine-DNA glycosylase (278 aa).

The Schiff-base intermediate with DNA role is filled by Pro-2. Glu-3 acts as the Proton donor in catalysis. The Proton donor; for beta-elimination activity role is filled by Lys-60. Residues His-95 and Arg-114 each coordinate DNA. The FPG-type zinc finger occupies 244–278 (WVYRRGGEPCRRCGTIIRRDKLSGRSTHWCPTCQG). The Proton donor; for delta-elimination activity role is filled by Arg-268.

This sequence belongs to the FPG family. As to quaternary structure, monomer. It depends on Zn(2+) as a cofactor.

The enzyme catalyses Hydrolysis of DNA containing ring-opened 7-methylguanine residues, releasing 2,6-diamino-4-hydroxy-5-(N-methyl)formamidopyrimidine.. It catalyses the reaction 2'-deoxyribonucleotide-(2'-deoxyribose 5'-phosphate)-2'-deoxyribonucleotide-DNA = a 3'-end 2'-deoxyribonucleotide-(2,3-dehydro-2,3-deoxyribose 5'-phosphate)-DNA + a 5'-end 5'-phospho-2'-deoxyribonucleoside-DNA + H(+). Functionally, involved in base excision repair of DNA damaged by oxidation or by mutagenic agents. Acts as a DNA glycosylase that recognizes and removes damaged bases. Has a preference for oxidized purines, such as 7,8-dihydro-8-oxoguanine (8-oxoG). Has AP (apurinic/apyrimidinic) lyase activity and introduces nicks in the DNA strand. Cleaves the DNA backbone by beta-delta elimination to generate a single-strand break at the site of the removed base with both 3'- and 5'-phosphates. The polypeptide is Formamidopyrimidine-DNA glycosylase (Parasynechococcus marenigrum (strain WH8102)).